We begin with the raw amino-acid sequence, 390 residues long: Precorrin-6Y C(5,15)-methyltransferase [decarboxylating] (390 aa).

Belongs to the precorrin methyltransferase family.

It carries out the reaction precorrin-6B + 2 S-adenosyl-L-methionine = precorrin-8X + 2 S-adenosyl-L-homocysteine + CO2 + 3 H(+). It participates in cofactor biosynthesis; adenosylcobalamin biosynthesis; cob(II)yrinate a,c-diamide from precorrin-2 (aerobic route): step 7/10. Functionally, catalyzes the methylation of both C-5 and C-15 in precorrin-6Y to form precorrin-8X. In Mycobacterium tuberculosis (strain CDC 1551 / Oshkosh), this protein is Precorrin-6Y C(5,15)-methyltransferase [decarboxylating] (cobL).